Here is a 795-residue protein sequence, read N- to C-terminus: Lon protease (795 aa).

The region spanning 7 to 213 is the Lon N-terminal domain; it reads SQILVVRGQV…KIIQAGIEDL (207 aa). 379-386 is a binding site for ATP; the sequence is GPPGVGKS. Residues 615 to 795 enclose the Lon proteolytic domain; that stretch reads VSLPGIVNGM…YSDIYNKLFS (181 aa). Catalysis depends on residues serine 702 and lysine 745.

It belongs to the peptidase S16 family. Homohexamer. Organized in a ring with a central cavity.

It localises to the cytoplasm. It catalyses the reaction Hydrolysis of proteins in presence of ATP.. In terms of biological role, ATP-dependent serine protease that mediates the selective degradation of mutant and abnormal proteins as well as certain short-lived regulatory proteins. Required for cellular homeostasis and for survival from DNA damage and developmental changes induced by stress. Degrades polypeptides processively to yield small peptide fragments that are 5 to 10 amino acids long. Binds to DNA in a double-stranded, site-specific manner. The polypeptide is Lon protease (Mycoplasma genitalium (strain ATCC 33530 / DSM 19775 / NCTC 10195 / G37) (Mycoplasmoides genitalium)).